A 278-amino-acid polypeptide reads, in one-letter code: Gasdermin-like protein het-Q1 (278 aa).

The protein belongs to the gasdermin family. Homooligomer; forms a homooligomeric ring-shaped pore complex when inserted in the membrane. Post-translationally, the precursor form is cleaved by het-Q2, generating the pore-forming protein (Gasdermin-like protein het-Q1, N-terminal).

It localises to the cell membrane. Gasdermin-like protein involved in heterokaryon incompatibility, a process that ensures that during spontaneous vegetative cell fusion, only compatible cells from the same colony survive (non-self-recognition). In P.anserina, the het-q locus exists as 2 incompatible alleles, het-Q1 (this entry) and het-Q2 (AC P0DW09). This form constitutes the precursor of the pore-forming protein: during the allorecognition process, it is cleaved by het-Q2, releasing the N-terminal moiety (Gasdermin-like protein het-Q1, N-terminal) that binds to membranes and forms pores, triggering cell death. Its function is as follows. Pore-forming protein that causes membrane permeabilization and cell death. Released upon cleavage and maturation by het-Q2 and binds to membrane inner leaflet lipids. Homooligomerizes within the membrane and forms pores of 10-15 nanometers (nm) of inner diameter, triggering cell death. In Podospora anserina (strain S / ATCC MYA-4624 / DSM 980 / FGSC 10383) (Pleurage anserina), this protein is Gasdermin-like protein het-Q1.